A 199-amino-acid polypeptide reads, in one-letter code: MAKLDTLKAALEKALGKRVQNLVEATGELTLIVKADDYLDVAQILRDDPSLRFEQLIDLCGVDYLEYADGAWDGPRFAAVSQLLSVTHNWRLRLRAFASDDDFPVLPSLINVWNSVNWFEREAFDFYGIVFDGHPDLRRILTDYGFVGHPFRKDFPVSGFVEMRYDPDQKRVIYQPVTIEPRELTPRVIREDKYGGVEH.

The protein belongs to the complex I 30 kDa subunit family. NDH-1 is composed of 14 different subunits. Subunits NuoB, C, D, E, F, and G constitute the peripheral sector of the complex.

The protein resides in the cell inner membrane. The enzyme catalyses a quinone + NADH + 5 H(+)(in) = a quinol + NAD(+) + 4 H(+)(out). Functionally, NDH-1 shuttles electrons from NADH, via FMN and iron-sulfur (Fe-S) centers, to quinones in the respiratory chain. The immediate electron acceptor for the enzyme in this species is believed to be ubiquinone. Couples the redox reaction to proton translocation (for every two electrons transferred, four hydrogen ions are translocated across the cytoplasmic membrane), and thus conserves the redox energy in a proton gradient. The polypeptide is NADH-quinone oxidoreductase subunit C (Cupriavidus taiwanensis (strain DSM 17343 / BCRC 17206 / CCUG 44338 / CIP 107171 / LMG 19424 / R1) (Ralstonia taiwanensis (strain LMG 19424))).